The chain runs to 258 residues: Granzyme M (258 aa).

One can recognise a Peptidase S1 domain in the interval 21–250 (IIGGREAVPH…YSSWIRKVIG (230 aa)). Cys-46 and Cys-62 are disulfide-bonded. Catalysis depends on charge relay system residues His-61 and Asp-107. The interval 122–141 (NVKPLALPRKPRDKPAEGSR) is disordered. Disulfide bonds link Cys-142/Cys-210, Cys-173/Cys-189, and Cys-200/Cys-226. Asn-174 carries an N-linked (GlcNAc...) asparagine glycan. Ser-204 functions as the Charge relay system in the catalytic mechanism. An N-linked (GlcNAc...) asparagine glycan is attached at Asn-225.

This sequence belongs to the peptidase S1 family. Granzyme subfamily.

Its subcellular location is the secreted. It is found in the cytoplasmic granule. In terms of biological role, cleaves peptide substrates after methionine, leucine, and norleucine. Physiological substrates include EZR, alpha-tubulins and the apoptosis inhibitor BIRC5/Survivin. Promotes caspase activation and subsequent apoptosis of target cells. The polypeptide is Granzyme M (Gzmm) (Rattus norvegicus (Rat)).